Here is a 71-residue protein sequence, read N- to C-terminus: Large ribosomal subunit protein bL31 (71 aa).

Zn(2+) contacts are provided by Cys-16, Cys-18, Cys-38, and Cys-41.

Belongs to the bacterial ribosomal protein bL31 family. Type A subfamily. Part of the 50S ribosomal subunit. Zn(2+) is required as a cofactor.

Its function is as follows. Binds the 23S rRNA. In Neisseria meningitidis serogroup A / serotype 4A (strain DSM 15465 / Z2491), this protein is Large ribosomal subunit protein bL31.